The sequence spans 469 residues: Argininosuccinate lyase (469 aa).

Belongs to the lyase 1 family. Argininosuccinate lyase subfamily.

The protein resides in the cytoplasm. It catalyses the reaction 2-(N(omega)-L-arginino)succinate = fumarate + L-arginine. It participates in amino-acid biosynthesis; L-arginine biosynthesis; L-arginine from L-ornithine and carbamoyl phosphate: step 3/3. This chain is Argininosuccinate lyase, found in Burkholderia mallei (strain NCTC 10247).